A 208-amino-acid polypeptide reads, in one-letter code: Putative archaetidylserine decarboxylase proenzyme (208 aa).

Catalysis depends on Ser-172, which acts as the Schiff-base intermediate with substrate; via pyruvic acid. At Ser-172 the chain carries Pyruvic acid (Ser); by autocatalysis.

The protein belongs to the phosphatidylserine decarboxylase family. PSD-A subfamily. In terms of assembly, heterodimer of a large membrane-associated beta subunit and a small pyruvoyl-containing alpha subunit. Requires pyruvate as cofactor. Post-translationally, is synthesized initially as an inactive proenzyme. Formation of the active enzyme involves a self-maturation process in which the active site pyruvoyl group is generated from an internal serine residue via an autocatalytic post-translational modification. Two non-identical subunits are generated from the proenzyme in this reaction, and the pyruvate is formed at the N-terminus of the alpha chain, which is derived from the carboxyl end of the proenzyme. The post-translation cleavage follows an unusual pathway, termed non-hydrolytic serinolysis, in which the side chain hydroxyl group of the serine supplies its oxygen atom to form the C-terminus of the beta chain, while the remainder of the serine residue undergoes an oxidative deamination to produce ammonia and the pyruvoyl prosthetic group on the alpha chain.

It localises to the cell membrane. It catalyses the reaction archaetidylserine + H(+) = archaetidylethanolamine + CO2. Functionally, catalyzes the formation of archaetidylethanolamine (PtdEtn) from archaetidylserine (PtdSer). This Methanosarcina mazei (strain ATCC BAA-159 / DSM 3647 / Goe1 / Go1 / JCM 11833 / OCM 88) (Methanosarcina frisia) protein is Putative archaetidylserine decarboxylase proenzyme.